Reading from the N-terminus, the 493-residue chain is Trigger factor (493 aa).

The region spanning 162–243 (GDFVSLDLSA…VRGVKEKELP (82 aa)) is the PPIase FKBP-type domain. Residues 432–493 (ELALPARPAP…AAVDSGDRDI (62 aa)) form a disordered region. Basic and acidic residues predominate over residues 449-470 (HAGHDHEGHDHADHAGHDHAGD). A compositionally biased stretch (low complexity) spans 474 to 485 (AEPAEAPAATAA).

Belongs to the FKBP-type PPIase family. Tig subfamily.

The protein resides in the cytoplasm. The enzyme catalyses [protein]-peptidylproline (omega=180) = [protein]-peptidylproline (omega=0). Its function is as follows. Involved in protein export. Acts as a chaperone by maintaining the newly synthesized protein in an open conformation. Functions as a peptidyl-prolyl cis-trans isomerase. In Frankia alni (strain DSM 45986 / CECT 9034 / ACN14a), this protein is Trigger factor.